The sequence spans 181 residues: ADP-ribosylation factor 1 (181 aa).

G2 is lipidated: N-myristoyl glycine. GTP is bound by residues 24 to 31 (GLDAAGKT), 67 to 71 (DVGGQ), and 126 to 129 (NKQD).

It belongs to the small GTPase superfamily. Arf family.

The protein resides in the golgi apparatus. The enzyme catalyses GTP + H2O = GDP + phosphate + H(+). In terms of biological role, GTP-binding protein involved in protein trafficking; may modulate vesicle budding and uncoating within the Golgi apparatus. This is ADP-ribosylation factor 1 (ARF1) from Daucus carota (Wild carrot).